The sequence spans 181 residues: Coatomer subunit zeta-3 (181 aa).

This sequence belongs to the adaptor complexes small subunit family. In terms of assembly, oligomeric complex that consists of at least the alpha, beta, beta', gamma, delta, epsilon and zeta subunits.

The protein localises to the cytoplasm. It localises to the golgi apparatus membrane. Its subcellular location is the cytoplasmic vesicle. It is found in the COPI-coated vesicle membrane. In terms of biological role, the coatomer is a cytosolic protein complex that binds to dilysine motifs and reversibly associates with Golgi non-clathrin-coated vesicles, which further mediate biosynthetic protein transport from the ER, via the Golgi up to the trans Golgi network. Coatomer complex is required for budding from Golgi membranes, and is essential for the retrograde Golgi-to-ER transport of dilysine-tagged proteins. The zeta subunit may be involved in regulating the coat assembly and, hence, the rate of biosynthetic protein transport due to its association-dissociation properties with the coatomer complex. This is Coatomer subunit zeta-3 from Arabidopsis thaliana (Mouse-ear cress).